A 525-amino-acid polypeptide reads, in one-letter code: GMP synthase [glutamine-hydrolyzing] (525 aa).

The Glutamine amidotransferase type-1 domain maps to 9–207 (RILILDFGSQ…ILDICGCEAL (199 aa)). The active-site Nucleophile is the Cys86. Residues His181 and Glu183 contribute to the active site. One can recognise a GMPS ATP-PPase domain in the interval 208-400 (WTPSKIAEDA…LGLPYDMVYR (193 aa)). An ATP-binding site is contributed by 235-241 (SGGVDSS).

In terms of assembly, homodimer.

The enzyme catalyses XMP + L-glutamine + ATP + H2O = GMP + L-glutamate + AMP + diphosphate + 2 H(+). It participates in purine metabolism; GMP biosynthesis; GMP from XMP (L-Gln route): step 1/1. Catalyzes the synthesis of GMP from XMP. The chain is GMP synthase [glutamine-hydrolyzing] from Pseudomonas syringae pv. syringae (strain B728a).